Reading from the N-terminus, the 172-residue chain is MKLLAGSFAALFLSLSAQAADCTFTQLEIVPQFGSPNMFGGEDEHVRVMFSNEDPNDDNPDAFPEPPVYLADRDSGNDCRIEDGGIWSRGGVFLSQDGRRVLMHEFSGSSAELVSYDSATCKVVHREDISGQRWAVDKDGLRLGQKCSGESVDSCAKIVKRSLAPFCQTAKK.

Positions 1–19 are cleaved as a signal peptide; that stretch reads MKLLAGSFAALFLSLSAQA. 3 cysteine pairs are disulfide-bonded: Cys22-Cys167, Cys79-Cys121, and Cys147-Cys155.

Forms a heterotetramer with Tse1 consisting of two Tse1 dimers and two Tsi1 dimers. Formation of the complex inactivates Tse1 enzymatic activity.

In terms of biological role, immunity protein that plays a role in preventing early activation of toxin Tse1. Binds to a large surface of Tse1 and thereby occludes the active site to specifically inhibits enzyme activity by forming a hydrogen bond with the catalytic diad. This chain is Immune protein Tsi1, found in Pseudomonas aeruginosa (strain ATCC 15692 / DSM 22644 / CIP 104116 / JCM 14847 / LMG 12228 / 1C / PRS 101 / PAO1).